The sequence spans 151 residues: Cell division protein SepF (151 aa).

Positions D17 to Q29 are enriched in acidic residues. The interval D17–H42 is disordered.

It belongs to the SepF family. As to quaternary structure, homodimer. Interacts with FtsZ.

The protein localises to the cytoplasm. Functionally, cell division protein that is part of the divisome complex and is recruited early to the Z-ring. Probably stimulates Z-ring formation, perhaps through the cross-linking of FtsZ protofilaments. Its function overlaps with FtsA. The protein is Cell division protein SepF of Lacticaseibacillus casei (strain BL23) (Lactobacillus casei).